The following is a 255-amino-acid chain: Ornithine decarboxylase antizyme (255 aa).

Belongs to the ODC antizyme family. In terms of assembly, interacts with ODC and thereby sterically blocks ODC homodimerization.

Its function is as follows. Ornithine decarboxylase (ODC) antizyme protein that negatively regulates ODC activity and intracellular polyamine biosynthesis in response to increased intracellular polyamine levels. Binds to ODC monomers, inhibiting the assembly of the functional ODC homodimer, and targets the monomers for ubiquitin-independent proteolytic destruction by the 26S proteasome. The sequence is that of Ornithine decarboxylase antizyme (OAZ1) from Eremothecium gossypii (strain ATCC 10895 / CBS 109.51 / FGSC 9923 / NRRL Y-1056) (Yeast).